The following is an 886-amino-acid chain: DNA mismatch repair protein MutS (886 aa).

641 to 648 contacts ATP; the sequence is GPNMAGKS.

It belongs to the DNA mismatch repair MutS family.

Functionally, this protein is involved in the repair of mismatches in DNA. It is possible that it carries out the mismatch recognition step. This protein has a weak ATPase activity. The chain is DNA mismatch repair protein MutS from Rickettsia akari (strain Hartford).